The sequence spans 434 residues: Guanosine-inosine kinase (434 aa).

GMP contacts are provided by residues 40-45, 93-97, and Arg198; these read DQTLVD and GTIGN. Residues 284–289, Gly357, and Asn402 contribute to the ATP site; that span reads TAGPIG.

Belongs to the carbohydrate kinase PfkB family. The cofactor is Mg(2+).

The catalysed reaction is guanosine + ATP = GMP + ADP + H(+). It catalyses the reaction inosine + ATP = IMP + ADP + H(+). It participates in purine metabolism; IMP biosynthesis via salvage pathway; IMP from inosine: step 1/1. The protein operates within purine metabolism; GMP biosynthesis via salvage pathway. Its function is as follows. Catalyzes the phosphorylation of guanosine and inosine to GMP and IMP, respectively. The chain is Guanosine-inosine kinase from Escherichia coli O157:H7.